The sequence spans 90 residues: Probable Fe(2+)-trafficking protein (90 aa).

It belongs to the Fe(2+)-trafficking protein family.

Could be a mediator in iron transactions between iron acquisition and iron-requiring processes, such as synthesis and/or repair of Fe-S clusters in biosynthetic enzymes. This chain is Probable Fe(2+)-trafficking protein, found in Polaromonas sp. (strain JS666 / ATCC BAA-500).